We begin with the raw amino-acid sequence, 283 residues long: Protein/nucleic acid deglycase HchA (283 aa).

Zn(2+)-binding residues include His86, Glu91, and His123. The active-site Nucleophile is Cys185.

It belongs to the peptidase C56 family. HchA subfamily. In terms of assembly, homodimer.

The protein resides in the cytoplasm. It carries out the reaction N(omega)-(1-hydroxy-2-oxopropyl)-L-arginyl-[protein] + H2O = lactate + L-arginyl-[protein] + H(+). The enzyme catalyses N(6)-(1-hydroxy-2-oxopropyl)-L-lysyl-[protein] + H2O = lactate + L-lysyl-[protein] + H(+). The catalysed reaction is S-(1-hydroxy-2-oxopropyl)-L-cysteinyl-[protein] + H2O = lactate + L-cysteinyl-[protein] + H(+). It catalyses the reaction N(omega)-(1-hydroxy-2-oxoethyl)-L-arginyl-[protein] + H2O = L-arginyl-[protein] + glycolate + H(+). It carries out the reaction N(6)-(1-hydroxy-2-oxoethyl)-L-lysyl-[protein] + H2O = glycolate + L-lysyl-[protein] + H(+). The enzyme catalyses S-(1-hydroxy-2-oxoethyl)-L-cysteinyl-[protein] + H2O = glycolate + L-cysteinyl-[protein] + H(+). The catalysed reaction is N(2)-(1-hydroxy-2-oxopropyl)-dGTP + H2O = lactate + dGTP + H(+). It catalyses the reaction N(2)-(1-hydroxy-2-oxopropyl)-GTP + H2O = lactate + GTP + H(+). It carries out the reaction N(2)-(1-hydroxy-2-oxopropyl)-GDP + H2O = lactate + GDP + H(+). The enzyme catalyses N(2)-(1-hydroxy-2-oxopropyl)-GMP + H2O = lactate + GMP + H(+). The catalysed reaction is N(2)-(1-hydroxy-2-oxoethyl)-dGTP + H2O = dGTP + glycolate + H(+). It catalyses the reaction N(2)-(1-hydroxy-2-oxoethyl)-GTP + H2O = glycolate + GTP + H(+). It carries out the reaction N(2)-(1-hydroxy-2-oxoethyl)-GDP + H2O = glycolate + GDP + H(+). The enzyme catalyses N(2)-(1-hydroxy-2-oxoethyl)-GMP + H2O = glycolate + GMP + H(+). The catalysed reaction is an N(2)-(1-hydroxy-2-oxopropyl)-guanosine in RNA + H2O = a guanosine in RNA + lactate + H(+). It catalyses the reaction an N(2)-(1-hydroxy-2-oxopropyl)-2'-deoxyguanosine in DNA + H2O = a 2'-deoxyguanosine in DNA + lactate + H(+). It carries out the reaction an N(2)-(1-hydroxy-2-oxoethyl)-guanosine in RNA + H2O = a guanosine in RNA + glycolate + H(+). The enzyme catalyses an N(2)-(1-hydroxy-2-oxoethyl)-2'-deoxyguanosine in DNA + H2O = a 2'-deoxyguanosine in DNA + glycolate + H(+). Functionally, protein and nucleotide deglycase that catalyzes the deglycation of the Maillard adducts formed between amino groups of proteins or nucleotides and reactive carbonyl groups of glyoxals. Thus, functions as a protein deglycase that repairs methylglyoxal- and glyoxal-glycated proteins, and releases repaired proteins and lactate or glycolate, respectively. Deglycates cysteine, arginine and lysine residues in proteins, and thus reactivates these proteins by reversing glycation by glyoxals. Acts on early glycation intermediates (hemithioacetals and aminocarbinols), preventing the formation of Schiff bases and advanced glycation endproducts (AGE). Also functions as a nucleotide deglycase able to repair glycated guanine in the free nucleotide pool (GTP, GDP, GMP, dGTP) and in DNA and RNA. Is thus involved in a major nucleotide repair system named guanine glycation repair (GG repair), dedicated to reversing methylglyoxal and glyoxal damage via nucleotide sanitization and direct nucleic acid repair. Plays an important role in protecting cells from carbonyl stress. This Escherichia coli (strain 55989 / EAEC) protein is Protein/nucleic acid deglycase HchA.